The following is a 142-amino-acid chain: Endoribonuclease YbeY (142 aa).

Residues His-107, His-111, and Asp-117 each coordinate Zn(2+).

The protein belongs to the endoribonuclease YbeY family. Zn(2+) serves as cofactor.

Its subcellular location is the cytoplasm. Single strand-specific metallo-endoribonuclease involved in late-stage 70S ribosome quality control and in maturation of the 3' terminus of the 16S rRNA. This chain is Endoribonuclease YbeY, found in Parabacteroides distasonis (strain ATCC 8503 / DSM 20701 / CIP 104284 / JCM 5825 / NCTC 11152).